The following is a 76-amino-acid chain: Horsegram inhibitor 1 (76 aa).

7 disulfides stabilise this stretch: C16–C70, C17–C32, C20–C66, C22–C30, C40–C47, C44–C59, and C49–C57.

It belongs to the Bowman-Birk serine protease inhibitor family. HGI-III exists in a state of equilibrium between monomer, homodimer and trimer, with homodimer being the predominant form. The homodimer is stabilized by the non-covalent interaction between Lys-24 of one subunit and Asp-76 of the other subunit. The homodimer is more thermostable than the monomer. HGGI-I, HGGI-II and HGGI-III exist as monomers. HGGI-I, HGGI-II and HGGI-III are produced by proteolysis of the N- and C-termini of HGI-III.

Its function is as follows. Inhibitors of trypsin and chymotrypsin. HGGI-III has a higher activity than HGGI-I or HGGI-II. This Vigna unguiculata subsp. cylindrica (Horse gram) protein is Horsegram inhibitor 1.